The primary structure comprises 353 residues: Methylthioribose-1-phosphate isomerase (353 aa).

The Proton donor role is filled by D241.

Belongs to the eIF-2B alpha/beta/delta subunits family. MtnA subfamily.

The protein localises to the cytoplasm. It localises to the nucleus. The catalysed reaction is 5-(methylsulfanyl)-alpha-D-ribose 1-phosphate = 5-(methylsulfanyl)-D-ribulose 1-phosphate. The protein operates within amino-acid biosynthesis; L-methionine biosynthesis via salvage pathway; L-methionine from S-methyl-5-thio-alpha-D-ribose 1-phosphate: step 1/6. In terms of biological role, catalyzes the interconversion of methylthioribose-1-phosphate (MTR-1-P) into methylthioribulose-1-phosphate (MTRu-1-P). The protein is Methylthioribose-1-phosphate isomerase (mri1) of Danio rerio (Zebrafish).